The following is a 257-amino-acid chain: Uracil phosphoribosyltransferase homolog (257 aa).

GTP-binding positions include R81, R90, and 124–127 (EKGN). R134 lines the 5-phospho-alpha-D-ribose 1-diphosphate pocket. GTP-binding residues include R151 and R180. 186–194 (YPILSTGNT) provides a ligand contact to 5-phospho-alpha-D-ribose 1-diphosphate. Uracil is bound at residue 247–249 (THF).

This sequence belongs to the UPRTase family.

The protein resides in the cytoplasm. The protein localises to the nucleus. This is Uracil phosphoribosyltransferase homolog (uprt) from Danio rerio (Zebrafish).